Here is a 432-residue protein sequence, read N- to C-terminus: 3-phosphoshikimate 1-carboxyvinyltransferase (432 aa).

Positions 23, 24, and 28 each coordinate 3-phosphoshikimate. K23 contributes to the phosphoenolpyruvate binding site. G99 and R127 together coordinate phosphoenolpyruvate. S172, S173, Q174, S200, D317, N341, and K345 together coordinate 3-phosphoshikimate. Residue Q174 participates in phosphoenolpyruvate binding. D317 acts as the Proton acceptor in catalysis. Positions 349, 391, and 416 each coordinate phosphoenolpyruvate.

This sequence belongs to the EPSP synthase family. In terms of assembly, monomer.

The protein localises to the cytoplasm. The enzyme catalyses 3-phosphoshikimate + phosphoenolpyruvate = 5-O-(1-carboxyvinyl)-3-phosphoshikimate + phosphate. Its pathway is metabolic intermediate biosynthesis; chorismate biosynthesis; chorismate from D-erythrose 4-phosphate and phosphoenolpyruvate: step 6/7. In terms of biological role, catalyzes the transfer of the enolpyruvyl moiety of phosphoenolpyruvate (PEP) to the 5-hydroxyl of shikimate-3-phosphate (S3P) to produce enolpyruvyl shikimate-3-phosphate and inorganic phosphate. The polypeptide is 3-phosphoshikimate 1-carboxyvinyltransferase (Blochmanniella pennsylvanica (strain BPEN)).